The chain runs to 100 residues: Protein Vpr (100 aa).

The homooligomerization stretch occupies residues 1–42 (MEQALENQGPAREPFNEWTLELLEELKEEAVRHFPRPWLQAC). Phosphoserine; by host is present on residues Ser-79, Ser-98, and Ser-100.

Belongs to the HIV-1 VPR protein family. As to quaternary structure, homooligomer, may form homodimer. Interacts with p6-gag region of the Pr55 Gag precursor protein through a (Leu-X-X)4 motif near the C-terminus of the P6gag protein. Interacts with host UNG. May interact with host RAD23A/HHR23A. Interacts with host VPRBP/DCAF1, leading to hijack the CUL4A-RBX1-DDB1-DCAF1/VPRBP complex, mediating ubiquitination of host proteins such as TERT and ZGPAT and arrest of the cell cycle in G2 phase. In terms of processing, phosphorylated on several residues by host. These phosphorylations regulate VPR activity for the nuclear import of the HIV-1 pre-integration complex.

It is found in the virion. The protein resides in the host nucleus. It localises to the host extracellular space. Its function is as follows. During virus replication, may deplete host UNG protein, and incude G2-M cell cycle arrest. Acts by targeting specific host proteins for degradation by the 26S proteasome, through association with the cellular CUL4A-DDB1 E3 ligase complex by direct interaction with host VPRPB/DCAF-1. Cell cycle arrest reportedly occurs within hours of infection and is not blocked by antiviral agents, suggesting that it is initiated by the VPR carried into the virion. Additionally, VPR induces apoptosis in a cell cycle dependent manner suggesting that these two effects are mechanistically linked. Detected in the serum and cerebrospinal fluid of AIDS patient, VPR may also induce cell death to bystander cells. Functionally, during virus entry, plays a role in the transport of the viral pre-integration (PIC) complex to the host nucleus. This function is crucial for viral infection of non-dividing macrophages. May act directly at the nuclear pore complex, by binding nucleoporins phenylalanine-glycine (FG)-repeat regions. The protein is Protein Vpr of Human immunodeficiency virus type 1 group O (isolate MVP5180) (HIV-1).